The following is a 1628-amino-acid chain: THO complex subunit 2 (1628 aa).

2 stretches are compositionally biased toward basic and acidic residues: residues 1–10 and 1360–1399; these read MTSLPEKDQQ and TDNKNLVENKAVEKRVEARSSANERKQEERRRKTTPEGNR. Disordered regions lie at residues 1 to 21 and 1337 to 1628; these read MTSLPEKDQQGEVSVSENQKK and VALN…RKIQ. Residues Thr1406 and Thr1408 each carry the phosphothreonine modification. A compositionally biased stretch (basic and acidic residues) spans 1411–1429; sequence DIQRSDSKLREDQSRDRTP. The span at 1430-1444 shows a compositional bias: polar residues; that stretch reads QSRSFTNENNDNLRS. The segment covering 1461–1474 has biased composition (basic and acidic residues); sequence ARREHESQKSDRWR. Residues 1476-1493 show a composition bias toward low complexity; that stretch reads NGNVNRNPRVSNNNSTNV. Over residues 1494 to 1526 the composition is skewed to basic and acidic residues; sequence SRERSSEANHRTSNDNKRDEVTEGKDKNKRQDI. Residues 1527 to 1550 show a composition bias toward polar residues; sequence SGESNSRQNNAISRAGRSNGSNRG. A compositionally biased stretch (basic and acidic residues) spans 1551-1560; it reads NDSRDADGRR. Ser1577 bears the Phosphoserine mark. The span at 1581–1628 shows a compositional bias: basic and acidic residues; that stretch reads LREEDERENSRRRARQDDRRDRDSRQQRDRPRDRTSRSAREEKRRKIQ.

It belongs to the THOC2 family. Component of the THO complex. THO associates with DNA and RNA in vitro.

Its subcellular location is the nucleus. In terms of biological role, component the THO subcomplex of the TREX complex, which operates in coupling transcription elongation to mRNA export. The THO complex is recruited to transcribed genes and moves along the gene with the elongating polymerase during transcription. THO is important for stabilizing nascent RNA in the RNA polymerase II elongation complex by preventing formation of DNA:RNA hybrids behind the elongating polymerase. This chain is THO complex subunit 2 (tho2), found in Schizosaccharomyces pombe (strain 972 / ATCC 24843) (Fission yeast).